The chain runs to 434 residues: ATP-dependent protease ATPase subunit HslU (434 aa).

ATP is bound by residues V18, 60 to 65, D247, E312, and R384; that span reads GVGKTE.

It belongs to the ClpX chaperone family. HslU subfamily. A double ring-shaped homohexamer of HslV is capped on each side by a ring-shaped HslU homohexamer. The assembly of the HslU/HslV complex is dependent on binding of ATP.

Its subcellular location is the cytoplasm. Functionally, ATPase subunit of a proteasome-like degradation complex; this subunit has chaperone activity. The binding of ATP and its subsequent hydrolysis by HslU are essential for unfolding of protein substrates subsequently hydrolyzed by HslV. HslU recognizes the N-terminal part of its protein substrates and unfolds these before they are guided to HslV for hydrolysis. This is ATP-dependent protease ATPase subunit HslU from Bradyrhizobium diazoefficiens (strain JCM 10833 / BCRC 13528 / IAM 13628 / NBRC 14792 / USDA 110).